Here is a 510-residue protein sequence, read N- to C-terminus: Light-independent protochlorophyllide reductase subunit B (510 aa).

D36 serves as a coordination point for [4Fe-4S] cluster. The active-site Proton donor is the D296. A substrate-binding site is contributed by 431–432 (GM).

The protein belongs to the ChlB/BchB/BchZ family. Protochlorophyllide reductase is composed of three subunits; ChlL, ChlN and ChlB. Forms a heterotetramer of two ChlB and two ChlN subunits. The cofactor is [4Fe-4S] cluster.

Its subcellular location is the plastid. It is found in the chloroplast. The enzyme catalyses chlorophyllide a + oxidized 2[4Fe-4S]-[ferredoxin] + 2 ADP + 2 phosphate = protochlorophyllide a + reduced 2[4Fe-4S]-[ferredoxin] + 2 ATP + 2 H2O. It functions in the pathway porphyrin-containing compound metabolism; chlorophyll biosynthesis (light-independent). Component of the dark-operative protochlorophyllide reductase (DPOR) that uses Mg-ATP and reduced ferredoxin to reduce ring D of protochlorophyllide (Pchlide) to form chlorophyllide a (Chlide). This reaction is light-independent. The NB-protein (ChlN-ChlB) is the catalytic component of the complex. The chain is Light-independent protochlorophyllide reductase subunit B from Physcomitrium patens (Spreading-leaved earth moss).